The sequence spans 668 residues: Tyrosine-protein phosphatase non-receptor type ptp-2 (668 aa).

SH2 domains follow at residues 10–113 and 134–232; these read NFYY…KKPV and WWHG…EEPL. In terms of domain architecture, Tyrosine-protein phosphatase spans 264 to 580; that stretch reads ISEEFDRLSQ…QFLYKALAFY (317 aa). The active-site Phosphocysteine intermediate is Cys518. A disordered region spans residues 603–668; it reads PRRLRPTPNA…SSTLLKSTKK (66 aa). 2 stretches are compositionally biased toward low complexity: residues 616-634 and 652-668; these read SSARQVTSSRPSSSASSRT and STSSTSSSSTLLKSTKK.

This sequence belongs to the protein-tyrosine phosphatase family. Non-receptor class 2 subfamily. In terms of tissue distribution, expressed in embryonic cells, developing vulva, body wall muscles, head neurons and gonadal sheath cells.

The protein resides in the cytoplasm. The enzyme catalyses O-phospho-L-tyrosyl-[protein] + H2O = L-tyrosyl-[protein] + phosphate. Involved in embryonic and larval development. Plays a role in oogenesis by regulating mpk-1 phosphorylation and oocyte maturation in response to major sperm protein (MSP). During the formation of neuromuscular junctions at the larval stage, negatively regulates membrane protrusion from body wall muscles probably downstream of receptor egl-15. Plays a role in fluid homeostasis probably downstream of receptor egl-15 and adapter soc-1. Promotes vulva induction and negatively regulates fertility probably downstream of receptor let-23. Negatively regulates daf-2-mediated repression of dauer formation. The protein is Tyrosine-protein phosphatase non-receptor type ptp-2 of Caenorhabditis elegans.